The following is a 166-amino-acid chain: Myeloid-derived growth factor (166 aa).

Residues 1–24 (MAAPSGGFWTAVVLAAAALKLAAA) form the signal peptide.

This sequence belongs to the MYDGF family. In terms of tissue distribution, expressed in prostate, spleen and lung, and weakly expressed in the left ventricle (LF) and liver. Expressed predominantly in inflammatory cells, such as monocytes and macrophages, and weakly expressed in neutrophils, T-cells, B-cells, endothelial cells and cardiac myocytes, after myocardial infarction (MI) (at protein level).

Its subcellular location is the secreted. The protein localises to the endoplasmic reticulum-Golgi intermediate compartment. It is found in the endoplasmic reticulum. It localises to the golgi apparatus. Functionally, bone marrow-derived monocyte and paracrine-acting protein that promotes cardiac myocyte survival and adaptive angiogenesis for cardiac protection and/or repair after myocardial infarction (MI). Stimulates endothelial cell proliferation through a MAPK1/3-, STAT3- and CCND1-mediated signaling pathway. Inhibits cardiac myocyte apoptosis in a PI3K/AKT-dependent signaling pathway. The protein is Myeloid-derived growth factor of Mus musculus (Mouse).